Reading from the N-terminus, the 491-residue chain is Protein nucleotidyltransferase YdiU (491 aa).

Residues glycine 94, glycine 96, arginine 97, lysine 117, aspartate 129, glycine 130, arginine 180, and arginine 187 each coordinate ATP. Aspartate 256 functions as the Proton acceptor in the catalytic mechanism. Mg(2+) contacts are provided by asparagine 257 and aspartate 266. Aspartate 266 lines the ATP pocket.

It belongs to the SELO family. Mg(2+) serves as cofactor. It depends on Mn(2+) as a cofactor.

It catalyses the reaction L-seryl-[protein] + ATP = 3-O-(5'-adenylyl)-L-seryl-[protein] + diphosphate. The catalysed reaction is L-threonyl-[protein] + ATP = 3-O-(5'-adenylyl)-L-threonyl-[protein] + diphosphate. The enzyme catalyses L-tyrosyl-[protein] + ATP = O-(5'-adenylyl)-L-tyrosyl-[protein] + diphosphate. It carries out the reaction L-histidyl-[protein] + UTP = N(tele)-(5'-uridylyl)-L-histidyl-[protein] + diphosphate. It catalyses the reaction L-seryl-[protein] + UTP = O-(5'-uridylyl)-L-seryl-[protein] + diphosphate. The catalysed reaction is L-tyrosyl-[protein] + UTP = O-(5'-uridylyl)-L-tyrosyl-[protein] + diphosphate. Functionally, nucleotidyltransferase involved in the post-translational modification of proteins. It can catalyze the addition of adenosine monophosphate (AMP) or uridine monophosphate (UMP) to a protein, resulting in modifications known as AMPylation and UMPylation. The chain is Protein nucleotidyltransferase YdiU from Clostridium botulinum (strain Eklund 17B / Type B).